The sequence spans 290 residues: Xyloglucan endotransglucosylase/hydrolase protein 3 (290 aa).

Positions 1–21 (MDYMRIFSVFVVTLWIIRVDA) are cleaved as a signal peptide. In terms of domain architecture, GH16 spans 22 to 220 (RVFGGRGIEK…WSYSPFIAHF (199 aa)). The Nucleophile role is filled by glutamate 109. Glutamate 113 (proton donor) is an active-site residue. Residues glutamate 113, 126–128 (QTN), 136–138 (NRE), 199–200 (DW), and glycine 204 contribute to the xyloglucan site. The N-linked (GlcNAc...) asparagine glycan is linked to asparagine 210. Cystine bridges form between cysteine 228–cysteine 240 and cysteine 276–cysteine 289.

This sequence belongs to the glycosyl hydrolase 16 family. XTH group 1 subfamily. Post-translationally, contains at least one intrachain disulfide bond essential for its enzymatic activity. In terms of tissue distribution, predominantly expressed in flower buds.

Its subcellular location is the secreted. The protein localises to the cell wall. The protein resides in the extracellular space. It localises to the apoplast. The enzyme catalyses breaks a beta-(1-&gt;4) bond in the backbone of a xyloglucan and transfers the xyloglucanyl segment on to O-4 of the non-reducing terminal glucose residue of an acceptor, which can be a xyloglucan or an oligosaccharide of xyloglucan.. Its function is as follows. Catalyzes xyloglucan endohydrolysis (XEH) and/or endotransglycosylation (XET). Cleaves and religates xyloglucan polymers, an essential constituent of the primary cell wall, and thereby participates in cell wall construction of growing tissues. The sequence is that of Xyloglucan endotransglucosylase/hydrolase protein 3 (XTH3) from Arabidopsis thaliana (Mouse-ear cress).